The following is a 131-amino-acid chain: Small ribosomal subunit protein uS11 (131 aa).

This sequence belongs to the universal ribosomal protein uS11 family. Part of the 30S ribosomal subunit. Interacts with proteins S7 and S18. Binds to IF-3.

Its function is as follows. Located on the platform of the 30S subunit, it bridges several disparate RNA helices of the 16S rRNA. Forms part of the Shine-Dalgarno cleft in the 70S ribosome. This chain is Small ribosomal subunit protein uS11, found in Paramagnetospirillum magneticum (strain ATCC 700264 / AMB-1) (Magnetospirillum magneticum).